We begin with the raw amino-acid sequence, 1068 residues long: MSAPNRQLVPIPGPSALPIVGNTFDLDLDASIQSLVNMFEEYGPVFQLTIAGHKQIFVGNVQLTNEVCDESRFCKIVFSGLELLRSAVHDGLFTAHEGERNWDIAHRILMPVFGPTKIRGMFDQMNDIAQQLCLKWGRYGPTFPIEVTEDFTRLTLDTIALCAMGYRFNSFYRDNMHPFVDRMNRFLKDTNTQSGLPDLFNSLWLHAKKRNKEDIKAMREFSQEVVDQRRQNPVDADDLLNALLHQTDPKTGEGLSDSSIIDNMITFLVAGHETTSGLLSFAFYYMLKNPWAMEKAQQEVDNVIGTERVTVNHLSKLEYLNAILRETLRLMPTAPAFTVGALKDDVIGGKYAVKKGEPINPILQAVHCDKEVYGPDATEWKPERMLEEGFHKLPANSWKPFGNGKRGCIGRAFAWQEALLVVAVLLQSFTFTEDDPSYQLRIREALTIKPDGFKIRATLREHKTTAGMVPESVQSLRQAQKSGKPGNSKSSANESMVGQGNGRSVSIFYGSNSGSCESLANLLASDCAKYGFSVQTTDALDAARENFTSNQIVLIVASTYDGKPADNATEFVNWLKSLTGEPLKGVSYAVFGCGHHDWATTFYKIPILIDELLEQRGAQRVAPRGAANAAVSDLFSDLEKWEESILWPALGLTPALLESQGDTQPRLTISFQRPYTQRKEFLEATVTSASELTTSASPSRKCHMELQLPQDMTYNTGDYLAVLPLNPLSNVQRALSRFHLAWDSVLVIEATGPTQLPTATPISVADLFGAYVELSQPATPRNIRALAGAASDEPTKQALLKLAEDDFATQVRDKRLSVLDLLGQYESVALPVEAFIEMLLPLRPRTYSISSAPQWNPSHASITWSIIDTVSWSGHGRFLGVASNHLYDLSPGAVVRVSVRRSNPAFHPPQDPNSYPIIMIASGSGLAPFRGFIQERALQQKAGMTLAPALLFFGCRGRDDDLHRAEMDDFEKSGVVRVMRAYSKAPNEPDAFGCAYIQERVWSERKEFRELWNRGATVFVCGGTKMSEAIKDVFIKIAYGNAGQDDNKSSRDWFASLDPHRYVAEVFN.

C408 contacts heme. The interval T464–G498 is disordered. Over residues S472–G498 the composition is skewed to polar residues. Residues V505–L646 enclose the Flavodoxin-like domain. FMN contacts are provided by residues S511–S515 and V590–A622. Residues K679–P909 form the FAD-binding FR-type domain.

It in the N-terminal section; belongs to the cytochrome P450 family. FAD is required as a cofactor. FMN serves as cofactor. It depends on heme as a cofactor.

It catalyses the reaction 2 oxidized [cytochrome P450] + NADPH = 2 reduced [cytochrome P450] + NADP(+) + H(+). The enzyme catalyses an organic molecule + reduced [NADPH--hemoprotein reductase] + O2 = an alcohol + oxidized [NADPH--hemoprotein reductase] + H2O + H(+). The catalysed reaction is dodecanoate + reduced [NADPH--hemoprotein reductase] + O2 = 3-hydroxydodecanoate + oxidized [NADPH--hemoprotein reductase] + H2O + H(+). It carries out the reaction dodecanoate + reduced [NADPH--hemoprotein reductase] + O2 = 7-hydroxydodecanoate + oxidized [NADPH--hemoprotein reductase] + H2O + H(+). It catalyses the reaction dodecan-1-ol + reduced [NADPH--hemoprotein reductase] + O2 = 1,4-dodecanediol + oxidized [NADPH--hemoprotein reductase] + H2O + H(+). The enzyme catalyses dodecan-1-ol + reduced [NADPH--hemoprotein reductase] + O2 = 1,3-dodecanediol + oxidized [NADPH--hemoprotein reductase] + H2O + H(+). Functionally, self-sufficient cytochrome P450 monooxygenase that catalyzes the regioselective in-chain hydroxylation of alkanes, fatty alcohols, and fatty acids. Preferentially hydroxylates 1-dodecanol at C3 and C4 (positions omega-8 and omega-9). It is very likely that CYP505U2 prefers dodecanol, and probably other fatty alcohols, over fatty acids as substrates. Does not show any significant activity toward tetradecanoic acid. In Exserohilum turcicum (strain 28A) (Northern leaf blight fungus), this protein is Self-sufficient cytochrome P450 monooxygenase CYP505U2.